We begin with the raw amino-acid sequence, 304 residues long: Aspartate carbamoyltransferase catalytic subunit (304 aa).

The carbamoyl phosphate site is built by R49 and T50. K77 is a binding site for L-aspartate. Carbamoyl phosphate is bound by residues R99, H127, and Q130. Residues R160 and R211 each coordinate L-aspartate. Carbamoyl phosphate-binding residues include A250 and P251.

This sequence belongs to the aspartate/ornithine carbamoyltransferase superfamily. ATCase family. As to quaternary structure, heterododecamer (2C3:3R2) of six catalytic PyrB chains organized as two trimers (C3), and six regulatory PyrI chains organized as three dimers (R2).

The enzyme catalyses carbamoyl phosphate + L-aspartate = N-carbamoyl-L-aspartate + phosphate + H(+). Its pathway is pyrimidine metabolism; UMP biosynthesis via de novo pathway; (S)-dihydroorotate from bicarbonate: step 2/3. Catalyzes the condensation of carbamoyl phosphate and aspartate to form carbamoyl aspartate and inorganic phosphate, the committed step in the de novo pyrimidine nucleotide biosynthesis pathway. The protein is Aspartate carbamoyltransferase catalytic subunit of Bacillus velezensis (strain DSM 23117 / BGSC 10A6 / LMG 26770 / FZB42) (Bacillus amyloliquefaciens subsp. plantarum).